Consider the following 701-residue polypeptide: Elongation factor G (701 aa).

One can recognise a tr-type G domain in the interval 10–286 (NKVRNIGIMA…AVIDYLPSPL (277 aa)). GTP is bound by residues 19 to 26 (AHIDAGKT), 83 to 87 (DTPGH), and 137 to 140 (NKMD).

Belongs to the TRAFAC class translation factor GTPase superfamily. Classic translation factor GTPase family. EF-G/EF-2 subfamily.

It localises to the cytoplasm. In terms of biological role, catalyzes the GTP-dependent ribosomal translocation step during translation elongation. During this step, the ribosome changes from the pre-translocational (PRE) to the post-translocational (POST) state as the newly formed A-site-bound peptidyl-tRNA and P-site-bound deacylated tRNA move to the P and E sites, respectively. Catalyzes the coordinated movement of the two tRNA molecules, the mRNA and conformational changes in the ribosome. This is Elongation factor G from Mycobacteroides abscessus (strain ATCC 19977 / DSM 44196 / CCUG 20993 / CIP 104536 / JCM 13569 / NCTC 13031 / TMC 1543 / L948) (Mycobacterium abscessus).